The sequence spans 384 residues: Succinyl-diaminopimelate desuccinylase (384 aa).

A Zn(2+)-binding site is contributed by histidine 72. Residue aspartate 74 is part of the active site. Position 105 (aspartate 105) interacts with Zn(2+). Glutamate 139 functions as the Proton acceptor in the catalytic mechanism. Zn(2+) contacts are provided by glutamate 140, glutamate 168, and histidine 355.

It belongs to the peptidase M20A family. DapE subfamily. Homodimer. Requires Zn(2+) as cofactor. Co(2+) serves as cofactor.

The catalysed reaction is N-succinyl-(2S,6S)-2,6-diaminopimelate + H2O = (2S,6S)-2,6-diaminopimelate + succinate. Its pathway is amino-acid biosynthesis; L-lysine biosynthesis via DAP pathway; LL-2,6-diaminopimelate from (S)-tetrahydrodipicolinate (succinylase route): step 3/3. In terms of biological role, catalyzes the hydrolysis of N-succinyl-L,L-diaminopimelic acid (SDAP), forming succinate and LL-2,6-diaminopimelate (DAP), an intermediate involved in the bacterial biosynthesis of lysine and meso-diaminopimelic acid, an essential component of bacterial cell walls. The protein is Succinyl-diaminopimelate desuccinylase of Blochmanniella pennsylvanica (strain BPEN).